Reading from the N-terminus, the 54-residue chain is uncharacterized protein (54 aa).

This is an uncharacterized protein from Saccharomyces cerevisiae (strain ATCC 204508 / S288c) (Baker's yeast).